The sequence spans 234 residues: Endonuclease NucS (234 aa).

This sequence belongs to the NucS endonuclease family.

It is found in the cytoplasm. Cleaves both 3' and 5' ssDNA extremities of branched DNA structures. This chain is Endonuclease NucS, found in Bifidobacterium animalis subsp. lactis (strain AD011).